The following is a 117-amino-acid chain: MYWSLTACSAVLFCLRDSLIFLADDVNPERGNEGVAVGTGGIPGRGIPPLITANGIGLYTFTSIGLLVPFTLGLKTQNQQIKIVVKSKISETNKLVIFCCLKHIISRKARSWLNDSR.

It localises to the plastid. The protein resides in the chloroplast. This is an uncharacterized protein from Chlamydomonas reinhardtii (Chlamydomonas smithii).